The chain runs to 305 residues: 5'-hydroxyaverantin dehydrogenase stcG (305 aa).

Residues serine 25, leucine 27, glutamine 48, aspartate 68, tyrosine 186, lysine 190, and serine 221 each coordinate NADP(+). Tyrosine 186 acts as the Proton acceptor in catalysis. Lysine 190 (lowers pKa of active site Tyr) is an active-site residue.

It belongs to the short-chain dehydrogenases/reductases (SDR) family.

It carries out the reaction (1'S,5'S)-5'-hydroxyaverantin + NAD(+) = (S)-5'-oxoaverantin + NADH + H(+). It catalyses the reaction (1'S,5'R)-5'-hydroxyaverantin + NAD(+) = (S)-5'-oxoaverantin + NADH + 2 H(+). The protein operates within mycotoxin biosynthesis; sterigmatocystin biosynthesis. 5'-hydroxyaverantin dehydrogenase; part of the gene cluster that mediates the biosynthesis of sterigmatocystin (ST), a polyketide-derived furanocoumarin which is part of the most toxic and carcinogenic compounds among the known mycotoxins. The first step in the biosynthesis of sterigmatocystin is the production of hexanoate by the fatty acid synthase (FAS) units stcJ and stcK. The polyketide backbone is assembled by the non-reducing polyketide synthase stcA by condensation of the starter hexanoyl-CoA and 7 malonyl-CoA extender units followed by cyclization and release of norsolorinic acid. Norsolorinic acid is the first stable intermediate in the biosynthesis of sterigmatocystin and is converted into averantin (AVN) by the ketoreductase stcE which reduces the hexanoate ketone to an alcohol. Averantin is then oxidized into 5'-hydroxyaverantin (HAVN) by the cytochrome P450 monooxygenase stcF. 5'-hydroxyaverantin is further converted to 5'-oxyaverantin (OAVN) by the 5'-hydroxyaverantin dehydrogenase stcG. The next step is the conversion of OAVN into averufin (AVF) which is catalyzed by a yet to be identified enzyme. The cytochrome P450 monooxygenase stcB and the flavin-binding monooxygenase stcW are both required for the conversion of averufin to 1-hydroxyversicolorone. The esterase stcI probably catalyzes the formation of versiconal hemiacetal acetate from 1-hydroxyversicolorone. The oxydoreductase stcN then probably catalyzes the biosynthetic step from versiconal to versicolorin B (VERB). The next step is performed by the versicolorin B desaturase stcL to produce versicolorin A (VERA). The ketoreductase stcU and the cytochrome P450 monooxygenase stcS are involved in the conversion of versicolorin A to demethylsterigmatocystin. The Baeyer-Villiger oxidas stcQ and the reductase stcR might be involved in the biosynthetic step from versicolorin A to demethylsterigmatocystin. The final step in the biosynthesis of sterigmatocystin is the methylation of demethylsterigmatocystin catalyzed by the methyltransferase stcP. The sequence is that of 5'-hydroxyaverantin dehydrogenase stcG from Emericella nidulans (strain FGSC A4 / ATCC 38163 / CBS 112.46 / NRRL 194 / M139) (Aspergillus nidulans).